Reading from the N-terminus, the 1065-residue chain is Ceruloplasmin (1065 aa).

A signal peptide spans 1 to 19 (MKILILGIFLFLCSTPAWA). Plastocyanin-like domains follow at residues 20–200 (KEKH…LIIC) and 209–357 (KEKH…VQEC). Residues tyrosine 55, glycine 64, and tyrosine 67 each coordinate Na(+). Residues histidine 120 and histidine 122 each coordinate Cu(2+). Histidine 120 is a binding site for O2. Lysine 128 contributes to the Ca(2+) binding site. The N-linked (GlcNAc...) (complex) asparagine glycan is linked to asparagine 138. Ca(2+) contacts are provided by glutamine 143, aspartate 146, and aspartate 147. A disulfide bridge connects residues cysteine 174 and cysteine 200. Cu(2+) is bound by residues histidine 180 and histidine 182. Histidine 180 is an O2 binding site. Serine 256 serves as a coordination point for Na(+). Residues cysteine 276 and cysteine 357 are joined by a disulfide bond. Histidine 295, cysteine 338, and histidine 343 together coordinate Cu(2+). Asparagine 358 and asparagine 397 each carry an N-linked (GlcNAc...) (complex) asparagine glycan. Plastocyanin-like domains are found at residues 370-560 (HVRH…MKIC) and 570-718 (RQKD…VNQC). Positions 408, 417, and 420 each coordinate Na(+). Residues cysteine 534 and cysteine 560 are joined by a disulfide bond. Asparagine 588 carries an N-linked (GlcNAc...) asparagine glycan. Residue serine 617 coordinates Na(+). Residues cysteine 637 and cysteine 718 are joined by a disulfide bond. Cu(2+)-binding residues include histidine 656, cysteine 699, histidine 704, and methionine 709. Cysteine 699 functions as the Nucleophile; for glutathione peroxidase activity in the catalytic mechanism. Phosphoserine; by FAM20C is present on serine 722. Plastocyanin-like domains lie at 730–900 (GERT…LIVC) and 908–1061 (FNPR…QNED). A glycan (N-linked (GlcNAc...) (complex) asparagine) is linked at asparagine 762. The Na(+) site is built by phenylalanine 767, glycine 776, and tyrosine 779. Cysteine 874 and cysteine 900 are oxidised to a cystine. An N-linked (GlcNAc...) asparagine glycan is attached at asparagine 926. Residue serine 955 participates in Na(+) binding. 8 residues coordinate Cu(2+): histidine 994, histidine 997, histidine 999, histidine 1039, cysteine 1040, histidine 1041, histidine 1045, and methionine 1050. Residues histidine 997 and histidine 999 each contribute to the O2 site. An O2-binding site is contributed by histidine 1041.

It belongs to the multicopper oxidase family. As to quaternary structure, found in a complex with MPO and LTF; interacts directly with MPO and LTF, which allows Fe(3+) incorporation into LTF, activation of CP ferroxidase activity and protection of CP antioxidant properties by MPO. Requires Cu(2+) as cofactor. In terms of tissue distribution, expressed by the liver and secreted in plasma.

It localises to the secreted. It catalyses the reaction 4 Fe(2+) + O2 + 4 H(+) = 4 Fe(3+) + 2 H2O. It carries out the reaction 4 Cu(+) + O2 + 4 H(+) = 4 Cu(2+) + 2 H2O. The enzyme catalyses a hydroperoxide + 2 glutathione = an alcohol + glutathione disulfide + H2O. The catalysed reaction is 4 nitric oxide + O2 + 2 H2O = 4 nitrite + 4 H(+). It catalyses the reaction 2 glutathione + H2O2 = glutathione disulfide + 2 H2O. In terms of biological role, multifunctional blue, copper-binding (6-7 atoms per molecule) glycoprotein. It has ferroxidase activity oxidizing Fe(2+) to Fe(3+) without releasing radical oxygen species. It is involved in iron transport across the cell membrane. Copper ions provide a large number of enzymatic activites. Oxidizes highly toxic ferrous ions to the ferric state for further incorporation onto apo-transferrins, catalyzes Cu(+) oxidation and promotes the oxidation of biogenic amines such as norepinephrin and serotonin. Provides Cu(2+) ions for the ascorbate-mediated deaminase degradation of the heparan sulfate chains of GPC1. Has glutathione peroxidase-like activity, can remove both hydrogen peroxide and lipid hydroperoxide in the presence of thiols. Also shows NO-oxidase and NO2 synthase activities that determine endocrine NO homeostasis. This chain is Ceruloplasmin, found in Homo sapiens (Human).